Here is a 227-residue protein sequence, read N- to C-terminus: ATP synthase F(0) complex subunit a (227 aa).

6 helical membrane passes run 14-34 (LLGI…LPSP), 69-89 (WALI…LGLL), 98-118 (QLSM…LTGL), 139-159 (IPAL…ALGV), 174-194 (LIST…VLTA), and 196-216 (VLLL…YVFV).

Belongs to the ATPase A chain family. Component of the ATP synthase complex composed at least of ATP5F1A/subunit alpha, ATP5F1B/subunit beta, ATP5MC1/subunit c (homooctomer), MT-ATP6/subunit a, MT-ATP8/subunit 8, ATP5ME/subunit e, ATP5MF/subunit f, ATP5MG/subunit g, ATP5MK/subunit k, ATP5MJ/subunit j, ATP5F1C/subunit gamma, ATP5F1D/subunit delta, ATP5F1E/subunit epsilon, ATP5PF/subunit F6, ATP5PB/subunit b, ATP5PD/subunit d, ATP5PO/subunit OSCP. ATP synthase complex consists of a soluble F(1) head domain (subunits alpha(3) and beta(3)) - the catalytic core - and a membrane F(0) domain - the membrane proton channel (subunits c, a, 8, e, f, g, k and j). These two domains are linked by a central stalk (subunits gamma, delta, and epsilon) rotating inside the F1 region and a stationary peripheral stalk (subunits F6, b, d, and OSCP). Interacts with DNAJC30; interaction is direct.

The protein localises to the mitochondrion inner membrane. It catalyses the reaction H(+)(in) = H(+)(out). Its function is as follows. Subunit a, of the mitochondrial membrane ATP synthase complex (F(1)F(0) ATP synthase or Complex V) that produces ATP from ADP in the presence of a proton gradient across the membrane which is generated by electron transport complexes of the respiratory chain. ATP synthase complex consist of a soluble F(1) head domain - the catalytic core - and a membrane F(1) domain - the membrane proton channel. These two domains are linked by a central stalk rotating inside the F(1) region and a stationary peripheral stalk. During catalysis, ATP synthesis in the catalytic domain of F(1) is coupled via a rotary mechanism of the central stalk subunits to proton translocation. With the subunit c (ATP5MC1), forms the proton-conducting channel in the F(0) domain, that contains two crucial half-channels (inlet and outlet) that facilitate proton movement from the mitochondrial intermembrane space (IMS) into the matrix. Protons are taken up via the inlet half-channel and released through the outlet half-channel, following a Grotthuss mechanism. In Struthio camelus (Common ostrich), this protein is ATP synthase F(0) complex subunit a.